The chain runs to 409 residues: MSHPEAPITPEVEADLAIARRGCDELLVESEFARKLARSRATGVPLRIKLGLDPTAPDIHLGHTVVLNKMRQLQDLGHNVIFLIGDFTSTIGDPSGRNSTRPPLTREQIETNAKTYYAQASLVLDPARTEIRYNSEWCDPLGARGMIQLASRYTVARMMEREDFTRRFKGGVPIAVHEFLYPLLQGYDSVALKADLELGGTDQKFNLLVGRELQKEYGQEQQCILTMPLLVGTDGVEKMSKSKGNYIGISEAPESMFGKLMSISDMLMWRYYELLSFRSLADIAALKAEIDGGRNPRDAKVALAQEIVARFHSPQAAEAALAAFEARFRDGAIPEDMPEVTVGGAPQGILRILREAGLVASGSEAQRNVEQGGVRVNGDRVEDKSLQLSAGTYVVQVGKRKFARVKLVG.

The short motif at 54 to 63 (PTAPDIHLGH) is the 'HIGH' region element. Positions 238–242 (KMSKS) match the 'KMSKS' region motif. ATP is bound at residue K241. The S4 RNA-binding domain maps to 347–407 (QGILRILREA…GKRKFARVKL (61 aa)).

Belongs to the class-I aminoacyl-tRNA synthetase family. TyrS type 2 subfamily. As to quaternary structure, homodimer.

It localises to the cytoplasm. It carries out the reaction tRNA(Tyr) + L-tyrosine + ATP = L-tyrosyl-tRNA(Tyr) + AMP + diphosphate + H(+). In terms of biological role, catalyzes the attachment of tyrosine to tRNA(Tyr) in a two-step reaction: tyrosine is first activated by ATP to form Tyr-AMP and then transferred to the acceptor end of tRNA(Tyr). The chain is Tyrosine--tRNA ligase from Bordetella parapertussis (strain 12822 / ATCC BAA-587 / NCTC 13253).